Here is a 445-residue protein sequence, read N- to C-terminus: Cryptochrome DASH (445 aa).

The 134-residue stretch at 4-137 folds into the Photolyase/cryptochrome alpha/beta domain; that stretch reads KIGLYWFTFD…VIVQHSVRSL (134 aa).

This sequence belongs to the DNA photolyase class-1 family. FAD is required as a cofactor. (6R)-5,10-methylene-5,6,7,8-tetrahydrofolate serves as cofactor.

Its function is as follows. May have a photoreceptor function. Binds DNA; probably functions as a transcriptional repressor. The polypeptide is Cryptochrome DASH (cry) (Vibrio parahaemolyticus serotype O3:K6 (strain RIMD 2210633)).